We begin with the raw amino-acid sequence, 332 residues long: Protein pelota homolog (332 aa).

This sequence belongs to the eukaryotic release factor 1 family. Pelota subfamily. Monomer. It depends on a divalent metal cation as a cofactor.

Its subcellular location is the cytoplasm. Its function is as follows. May function in recognizing stalled ribosomes, interact with stem-loop structures in stalled mRNA molecules, and effect endonucleolytic cleavage of the mRNA. May play a role in the release non-functional ribosomes and degradation of damaged mRNAs. Has endoribonuclease activity. The chain is Protein pelota homolog from Pyrobaculum calidifontis (strain DSM 21063 / JCM 11548 / VA1).